A 448-amino-acid chain; its full sequence is MSNESFPETLENLLSTLQTKQQNAIQSEVIEWLHNFCETFHLKIHCHKQFIPSGEKKRAKIPAQETQGNTQPSHHVHRIVLSRAQPVKAQESLLTTMCNGLVLDANTWTCLAIPPPAPFQQATRQVQHFYRNNFYEVVPIQDGTLLTIYYWDDPEHGPSWCLASTHGYDVSNYCWIGDKTFAELVYELLQQHSTCDVTLEKNKTRGTRLFFNNLNPDYCYTIGIRHHNLQPLIYDPQNIWAIQSTNLKTLKTVYPEYYGYIGIPGIQSQVPELPQYDLPYLIRSYKTAMNQAKNAIKNGKKDKGYFNYGYLLISRAPAITKSTSNVLLKSPLLVFLQKSVYQKKHNISNSQRLEFIILQNYLMQHFRDHFIALFPQYISYYTKYQNMLNMIINSIATKDKDHPFAGAVVKKVLEDIENAENIIDHTTIQNYVHQSKYAMLYLSIISHF.

This sequence belongs to the asfivirus M448R family.

It is found in the virion. In Ornithodoros (relapsing fever ticks), this protein is Putative RNA-ligase.